A 306-amino-acid chain; its full sequence is D-alanine--D-alanine ligase (306 aa).

One can recognise an ATP-grasp domain in the interval Lys104–Glu303. An ATP-binding site is contributed by Val134–Thr189. Residues Asp257, Glu270, and Asn272 each coordinate Mg(2+).

It belongs to the D-alanine--D-alanine ligase family. Mg(2+) is required as a cofactor. It depends on Mn(2+) as a cofactor.

It is found in the cytoplasm. The catalysed reaction is 2 D-alanine + ATP = D-alanyl-D-alanine + ADP + phosphate + H(+). It participates in cell wall biogenesis; peptidoglycan biosynthesis. Cell wall formation. The polypeptide is D-alanine--D-alanine ligase (Haemophilus influenzae (strain PittGG)).